A 123-amino-acid chain; its full sequence is Large ribosomal subunit protein uL18 (123 aa).

It belongs to the universal ribosomal protein uL18 family. In terms of assembly, part of the 50S ribosomal subunit; part of the 5S rRNA/L5/L18/L25 subcomplex. Contacts the 5S and 23S rRNAs.

This is one of the proteins that bind and probably mediate the attachment of the 5S RNA into the large ribosomal subunit, where it forms part of the central protuberance. This is Large ribosomal subunit protein uL18 from Chlamydia caviae (strain ATCC VR-813 / DSM 19441 / 03DC25 / GPIC) (Chlamydophila caviae).